Here is a 341-residue protein sequence, read N- to C-terminus: UDP-3-O-(3-hydroxymyristoyl)glucosamine N-acyltransferase (341 aa).

His239 functions as the Proton acceptor in the catalytic mechanism.

Belongs to the transferase hexapeptide repeat family. LpxD subfamily. Homotrimer.

It catalyses the reaction a UDP-3-O-[(3R)-3-hydroxyacyl]-alpha-D-glucosamine + a (3R)-hydroxyacyl-[ACP] = a UDP-2-N,3-O-bis[(3R)-3-hydroxyacyl]-alpha-D-glucosamine + holo-[ACP] + H(+). It carries out the reaction UDP-3-O-[(3R)-3-hydroxytetradecanoyl]-alpha-D-glucosamine + (3R)-hydroxytetradecanoyl-[ACP] = UDP-2-N,3-O-bis[(3R)-3-hydroxytetradecanoyl]-alpha-D-glucosamine + holo-[ACP] + H(+). It participates in glycolipid biosynthesis; lipid IV(A) biosynthesis; lipid IV(A) from (3R)-3-hydroxytetradecanoyl-[acyl-carrier-protein] and UDP-N-acetyl-alpha-D-glucosamine: step 3/6. Its function is as follows. Catalyzes the N-acylation of UDP-3-O-(hydroxytetradecanoyl)glucosamine using 3-hydroxytetradecanoyl-ACP as the acyl donor. Is involved in the biosynthesis of lipid A, a phosphorylated glycolipid that anchors the lipopolysaccharide to the outer membrane of the cell. The polypeptide is UDP-3-O-(3-hydroxymyristoyl)glucosamine N-acyltransferase (Shigella dysenteriae serotype 1 (strain Sd197)).